Consider the following 190-residue polypeptide: Threonylcarbamoyl-AMP synthase (190 aa).

The YrdC-like domain maps to 7 to 190 (LGSIAQAVDV…ALTGERFRQG (184 aa)).

It belongs to the SUA5 family. TsaC subfamily.

It is found in the cytoplasm. The catalysed reaction is L-threonine + hydrogencarbonate + ATP = L-threonylcarbamoyladenylate + diphosphate + H2O. Functionally, required for the formation of a threonylcarbamoyl group on adenosine at position 37 (t(6)A37) in tRNAs that read codons beginning with adenine. Catalyzes the conversion of L-threonine, HCO(3)(-)/CO(2) and ATP to give threonylcarbamoyl-AMP (TC-AMP) as the acyladenylate intermediate, with the release of diphosphate. This Enterobacter sp. (strain 638) protein is Threonylcarbamoyl-AMP synthase.